Consider the following 1679-residue polypeptide: GRIP and coiled-coil domain-containing protein 2 (1679 aa).

M1 carries the post-translational modification N-acetylmethionine. Disordered regions lie at residues 1-23 (MEDS…KLET) and 1466-1522 (LKSE…SAGT). Residues 35–1469 (KQMMLLQKAK…ETQLFQLKSE (1435 aa)) adopt a coiled-coil conformation. Phosphoserine is present on residues S1474 and S1478. Over residues 1474–1483 (SPASSHQPSK) the composition is skewed to polar residues. The segment at 1569-1608 (HLNGLLRETEATNAILMEQIKLLKSEIRRLERNQEREKSV) is mediates interaction with RAB6A. Residues 1569–1679 (HLNGLLRETE…SYLHSWSGLR (111 aa)) form a mediates interaction with RAB9A region. The region spanning 1604 to 1654 (REKSVANLEYLKNVLLRFIFLKPGSERERLLPVIDTMLQLSPEEKGKLATV) is the GRIP domain.

As to quaternary structure, homodimer. Interacts (via GRIP domain) with RAB6A (preferentially in its GTP-bound form). May interact (RAB6A-dependent) with ARL1; might be involved in GCC2 Golgi localization. Interacts with CLASP1 and CLASP2; recruits both proteins to membranes of the TGN. Interacts with STX16. Interacts (probably via GRIP domain) with RAB9A (preferentially in its GTP-bound form).

Its subcellular location is the cytoplasm. It localises to the golgi apparatus. It is found in the trans-Golgi network membrane. In terms of biological role, golgin which probably tethers transport vesicles to the trans-Golgi network (TGN) and regulates vesicular transport between the endosomes and the Golgi. As a RAB9A effector it is involved in recycling of the mannose 6-phosphate receptor from the late endosomes to the TGN. May also play a role in transport between the recycling endosomes and the Golgi. Required for maintenance of the Golgi structure, it is involved in the biogenesis of noncentrosomal, Golgi-associated microtubules through recruitment of CLASP1 and CLASP2. In Rattus norvegicus (Rat), this protein is GRIP and coiled-coil domain-containing protein 2 (Gcc2).